The primary structure comprises 145 residues: MDHGNMPPSSPSSMVNHTNSNMIMMHMTFFWGKNTEILFSGWPGTSLGMYVLCLIVVFLLAVIVEWLAHSSILRGRGSTSRAKGLVQTAVYTLKTGLAYLVMLAVMSFNGGVFIVAIAGFAVGFMLFGSTAFKNPSDDEKPFEQL.

Transmembrane regions (helical) follow at residues 47–67 and 99–119; these read LGMY…VEWL and YLVM…AIAG.

Belongs to the copper transporter (Ctr) (TC 1.A.56) family. SLC31A subfamily.

Its subcellular location is the membrane. Involved in the transport of copper. This is Copper transporter 6 (COPT6) from Arabidopsis thaliana (Mouse-ear cress).